Here is a 303-residue protein sequence, read N- to C-terminus: MMQDLRLILIIVGAIAIIALLLHGLWTSRKERSSLFRDRPVKRHKHDRQNSFVDDSDDEAFDNQQKPYAHKQVKSHQEYKAEPAIERRQQKLTEIDAATPEESDDPLLTGRQPETTARRAAIEEQEPQLGLFEFEEQNESERNGSAIEEKSQEAAGEKEAQTKVKEIVLVLHVAAHHGQELNGESLLQSILQSGFQFGEMQIFHRHVNPSGSGPVLFSLANMVKPGSFNPETMVDFTTPGVSIFMMVPSYGESSQNFKLMLQAAQRIASDVGGVVLDDERKMLTPQKIELYKARIRSTLGVQV.

The Periplasmic segment spans residues Met-1–Arg-6. A helical membrane pass occupies residues Leu-7–Thr-27. The Cytoplasmic segment spans residues Ser-28–Val-303. 3 disordered regions span residues Arg-39–Phe-61, Lys-66–Ile-85, and Glu-124–Glu-159. Basic and acidic residues-rich tracts occupy residues Ser-75–Ile-85 and Glu-139–Glu-159.

Belongs to the ZipA family. As to quaternary structure, interacts with FtsZ via their C-terminal domains.

The protein localises to the cell inner membrane. Essential cell division protein that stabilizes the FtsZ protofilaments by cross-linking them and that serves as a cytoplasmic membrane anchor for the Z ring. Also required for the recruitment to the septal ring of downstream cell division proteins. In Photorhabdus laumondii subsp. laumondii (strain DSM 15139 / CIP 105565 / TT01) (Photorhabdus luminescens subsp. laumondii), this protein is Cell division protein ZipA.